The sequence spans 310 residues: MDDFSSISLLSVAMLVGCYVAGTIPLAVNFSEEKLKLITVLGAGLLCGTALAVIIPEGVHAIYEEILEGGHHSHGQAGVVEVSEAKGDAESVLSGGGKHEHSHEQLHACIGVSLVLGFVFMLLVDQIGSSHVHSTEDPESARVTSSKITTTLGLVVHAAADGVALGAAASTSQTSVQLIVFVAIMLHKAPAAFGLVSFLMHAGLERNRIRKHLLVFALAAPVLAMLTFLGLSQSSKEALSDINATGVAMLFSAGTFLYVATVHVLPEVGGGGHSHAASGGNGGKGLSKVEVVALVLGCLIPLVLSVGHHH.

The next 8 helical transmembrane spans lie at 7–27 (ISLL…IPLA), 35–55 (LKLI…AVII), 108–128 (ACIG…DQIG), 148–168 (ITTT…LGAA), 178–198 (LIVF…LVSF), 212–232 (HLLV…LGLS), 246–266 (GVAM…HVLP), and 289–309 (VEVV…VGHH).

The protein belongs to the ZIP transporter (TC 2.A.5) family. Expressed in brain, liver, ovary, and testis.

It is found in the golgi apparatus. The protein localises to the trans-Golgi network membrane. It localises to the cell membrane. Its subcellular location is the cytoplasm. The protein resides in the perinuclear region. It is found in the mitochondrion. The protein localises to the nucleus. It carries out the reaction Zn(2+)(in) = Zn(2+)(out). Has dual functions as a membrane-bound androgen receptor and as an androgen-dependent zinc transporter both of which are mediated through G protein activation and are required for the androgen-dependent apoptotic response. Upon androgen binding, mediates apoptosis by directly activating a stimulatory G protein that leads to increased cAMP levels and MAP kinase activity and which is accompanied by increased intracellular free zinc levels. In Micropogonias undulatus (Atlantic croaker), this protein is Zinc transporter ZIP9.